Consider the following 444-residue polypeptide: MSNTILQHLPIGQKVGIAFSGGLDTSAALLWMRQKGAVPYAYTANLGQPDEEDYNAIPRKAMEYGAEKARLIDCRNQLAHEGIAAIQCGAFHISTGGVTYFNTTPLGRAVTGTMLVSAMKEDDVNIWGDGSTFKGNDIERFYRYGLLTNPSLRIYKPWLDNQFIDELGGRQEMSEFLIANGFDYKMSAEKAYSTDSNMLGATHEAKDLEYLNSGIRIVKPIMGVAFWRDDVTVKAEEVTVGFEDGVPVTLNGQSFSSAVELFLEANRIGGRHGLGMSDQIENRIIEAKSRGIYEAPGMALLHIAYERLVTAIHNEDTIEQYRINGLRLGRLLYQGRWFDPQALMLRETAQRWVARAVTGEVTLELRRGNDYSILNTVSPNMTYHPERLSMEKVENAPFDPSDRIGQLTMRNLDITDTRDKLGIYTHTGLLTVGKDSMLPQLDKK.

ATP is bound by residues 18–26 (AFSGGLDTS) and Ala44. Residue Tyr100 coordinates L-citrulline. Positions 130 and 132 each coordinate ATP. Residues Thr132, Asn136, and Asp137 each coordinate L-aspartate. Residue Asn136 participates in L-citrulline binding. Asp137 contacts ATP. 2 residues coordinate L-citrulline: Arg140 and Ser193. Asp195 contacts ATP. Residues Thr202, Glu204, and Glu281 each contribute to the L-citrulline site.

It belongs to the argininosuccinate synthase family. Type 2 subfamily. As to quaternary structure, homotetramer.

The protein resides in the cytoplasm. It carries out the reaction L-citrulline + L-aspartate + ATP = 2-(N(omega)-L-arginino)succinate + AMP + diphosphate + H(+). It functions in the pathway amino-acid biosynthesis; L-arginine biosynthesis; L-arginine from L-ornithine and carbamoyl phosphate: step 2/3. The protein is Argininosuccinate synthase of Histophilus somni (strain 2336) (Haemophilus somnus).